The primary structure comprises 381 residues: uncharacterized protein (381 aa).

Transmembrane regions (helical) follow at residues 22 to 42 and 246 to 266; these read GVLL…YLTA and LIPE…LLVA.

The protein resides in the cell membrane. This is an uncharacterized protein from Mycobacterium tuberculosis (strain ATCC 25618 / H37Rv).